We begin with the raw amino-acid sequence, 62 residues long: Large ribosomal subunit protein uL30 (62 aa).

This sequence belongs to the universal ribosomal protein uL30 family. Part of the 50S ribosomal subunit.

The sequence is that of Large ribosomal subunit protein uL30 from Geobacillus thermodenitrificans (strain NG80-2).